A 381-amino-acid chain; its full sequence is Succinyl-diaminopimelate desuccinylase (381 aa).

His-76 is a binding site for Zn(2+). Residue Asp-78 is part of the active site. Asp-107 is a binding site for Zn(2+). Glu-140 acts as the Proton acceptor in catalysis. The Zn(2+) site is built by Glu-141, Glu-169, and His-354.

It belongs to the peptidase M20A family. DapE subfamily. Homodimer. Requires Zn(2+) as cofactor. The cofactor is Co(2+).

The enzyme catalyses N-succinyl-(2S,6S)-2,6-diaminopimelate + H2O = (2S,6S)-2,6-diaminopimelate + succinate. It functions in the pathway amino-acid biosynthesis; L-lysine biosynthesis via DAP pathway; LL-2,6-diaminopimelate from (S)-tetrahydrodipicolinate (succinylase route): step 3/3. Catalyzes the hydrolysis of N-succinyl-L,L-diaminopimelic acid (SDAP), forming succinate and LL-2,6-diaminopimelate (DAP), an intermediate involved in the bacterial biosynthesis of lysine and meso-diaminopimelic acid, an essential component of bacterial cell walls. This Gluconobacter oxydans (strain 621H) (Gluconobacter suboxydans) protein is Succinyl-diaminopimelate desuccinylase.